A 336-amino-acid chain; its full sequence is DNA topoisomerase 1B (336 aa).

One can recognise a Topo IB-type catalytic domain in the interval 79-336 (EIHIQGAEKE…KSYRKDVLGE (258 aa)). Catalysis depends on Tyr-294, which acts as the O-(3'-phospho-DNA)-tyrosine intermediate.

The protein belongs to the type IB topoisomerase family. In terms of assembly, monomer.

It localises to the virion. The enzyme catalyses ATP-independent breakage of single-stranded DNA, followed by passage and rejoining.. Releases the supercoiling and torsional tension of DNA introduced during the DNA replication and transcription by transiently cleaving and rejoining one strand of the DNA duplex. Introduces a single-strand break via transesterification at a target site in duplex DNA. The scissile phosphodiester is attacked by the catalytic tyrosine of the enzyme, resulting in the formation of a DNA-(3'-phosphotyrosyl)-enzyme intermediate and the expulsion of a 5'-OH DNA strand. The free DNA strand then undergoes passage around the unbroken strand thus removing DNA supercoils. Finally, in the religation step, the DNA 5'-OH attacks the covalent intermediate to expel the active-site tyrosine and restore the DNA phosphodiester backbone. Cleaves DNA after CCCTT sequence. The chain is DNA topoisomerase 1B (TOP1E) from Acanthamoeba polyphaga mimivirus (APMV).